Reading from the N-terminus, the 580-residue chain is Probable RNA-binding protein CG14230 (580 aa).

An RRM domain is found at 4–81; it reads TRFFLADLPT…EKLRVSLAKE (78 aa). Positions 89 to 100 are enriched in basic and acidic residues; that stretch reads REREENQRREQG. Disordered stretches follow at residues 89–131 and 173–211; these read RERE…EDEE and QHRK…KSAI. Polar residues predominate over residues 110–120; it reads PSSQLLVQSGQ. Ser-231 carries the phosphoserine modification. Composition is skewed to acidic residues over residues 254–263 and 298–313; these read ENDDDEEEEQ and NEEE…EPEE. Disordered stretches follow at residues 254–316, 333–395, and 463–520; these read ENDD…ESER, SAND…SAVS, and PFSY…IPRN. Basic and acidic residues-rich tracts occupy residues 348–358 and 365–377; these read LRFDPAKEGHQ and QPKE…EETS. The segment covering 386–395 has biased composition (polar residues); the sequence is AGNSQASAVS. At Ser-468 the chain carries Phosphoserine. Thr-475 carries the phosphothreonine modification.

This Drosophila melanogaster (Fruit fly) protein is Probable RNA-binding protein CG14230.